The chain runs to 916 residues: DNA repair endonuclease XPF (916 aa).

The interval 1 to 457 (MESGQPARRI…EVWMKFRKED (457 aa)) is helicase-like. Leucine-zipper stretches follow at residues 233 to 254 (LNAC…DLSL) and 270 to 298 (LDPL…LQYL). An N6-acetyllysine modification is found at lysine 289. A disordered region spans residues 460–487 (KRIRKSHKRPKDPQNKERASTKERTLKK). A compositionally biased stretch (basic and acidic residues) spans 470 to 483 (KDPQNKERASTKER). Residues 486-491 (KKKKRK) carry the Nuclear localization signal motif. Lysine 500 is covalently cross-linked (Glycyl lysine isopeptide (Lys-Gly) (interchain with G-Cter in SUMO2)). Disordered stretches follow at residues 502 to 526 (EELE…ESCP) and 660 to 679 (TASA…EQNG). Phosphoserine is present on serine 521. Positions 658 to 813 (RGTASADVST…PSPHATAELF (156 aa)) are nuclease. An ERCC4 domain is found at 683 to 763 (SIVVDMREFR…RPVLLIEFDP (81 aa)). Position 764 is a phosphoserine (serine 764). A hhH2, dimerization with ERCC1 region spans residues 837–905 (TLPESEKYNP…QLYDFIHTSF (69 aa)). Lysine 911 bears the N6-acetyllysine mark.

This sequence belongs to the XPF family. In terms of assembly, heterodimer composed of ERCC1 and ERCC4/XPF. Interacts with SLX4/BTBD12; this interaction is direct and links the ERCC1-ERCC4/XPF complex to SLX4, which may coordinate the action of the structure-specific endonuclease during DNA repair. It depends on Mg(2+) as a cofactor. Acetylation at Lys-911 by KAT5 promotes interaction with ERCC1 by disrupting a salt bridge between Glu-907 and Lys-911, thereby exposing a second binding site for ERCC1. Deacetylated by SIRT1.

The protein resides in the nucleus. The protein localises to the chromosome. In terms of biological role, catalytic component of a structure-specific DNA repair endonuclease responsible for the 5-prime incision during DNA repair, and which is essential for nucleotide excision repair (NER) and interstrand cross-link (ICL) repair. This Homo sapiens (Human) protein is DNA repair endonuclease XPF.